The sequence spans 89 residues: Small ribosomal subunit protein uS15 (89 aa).

It belongs to the universal ribosomal protein uS15 family. As to quaternary structure, part of the 30S ribosomal subunit. Forms a bridge to the 50S subunit in the 70S ribosome, contacting the 23S rRNA.

Its function is as follows. One of the primary rRNA binding proteins, it binds directly to 16S rRNA where it helps nucleate assembly of the platform of the 30S subunit by binding and bridging several RNA helices of the 16S rRNA. Forms an intersubunit bridge (bridge B4) with the 23S rRNA of the 50S subunit in the ribosome. The sequence is that of Small ribosomal subunit protein uS15 from Streptococcus agalactiae serotype Ia (strain ATCC 27591 / A909 / CDC SS700).